We begin with the raw amino-acid sequence, 316 residues long: Acetyl-coenzyme A carboxylase carboxyl transferase subunit alpha (316 aa).

The CoA carboxyltransferase C-terminal domain maps to 35 to 292 (EIEILSQKLE…KTYVLQELKD (258 aa)).

It belongs to the AccA family. Acetyl-CoA carboxylase is a heterohexamer composed of biotin carboxyl carrier protein (AccB), biotin carboxylase (AccC) and two subunits each of ACCase subunit alpha (AccA) and ACCase subunit beta (AccD).

The protein localises to the cytoplasm. The catalysed reaction is N(6)-carboxybiotinyl-L-lysyl-[protein] + acetyl-CoA = N(6)-biotinyl-L-lysyl-[protein] + malonyl-CoA. It participates in lipid metabolism; malonyl-CoA biosynthesis; malonyl-CoA from acetyl-CoA: step 1/1. Its function is as follows. Component of the acetyl coenzyme A carboxylase (ACC) complex. First, biotin carboxylase catalyzes the carboxylation of biotin on its carrier protein (BCCP) and then the CO(2) group is transferred by the carboxyltransferase to acetyl-CoA to form malonyl-CoA. This Alkaliphilus oremlandii (strain OhILAs) (Clostridium oremlandii (strain OhILAs)) protein is Acetyl-coenzyme A carboxylase carboxyl transferase subunit alpha.